Reading from the N-terminus, the 308-residue chain is Tryptophan 2,3-dioxygenase (308 aa).

Residues 1 to 35 are disordered; it reads MQPPGDNAPAGCPFSGAHAAQPAHEAPHVPGDAAG. The span at 17 to 30 shows a compositional bias: low complexity; that stretch reads AHAAQPAHEAPHVP. Residues 77-81, Tyr139, and Arg143 contribute to the substrate site; that span reads FIIQH. His266 contributes to the heme binding site. Thr280 contributes to the substrate binding site.

This sequence belongs to the tryptophan 2,3-dioxygenase family. In terms of assembly, homotetramer. Heme serves as cofactor.

It catalyses the reaction L-tryptophan + O2 = N-formyl-L-kynurenine. The protein operates within amino-acid degradation; L-tryptophan degradation via kynurenine pathway; L-kynurenine from L-tryptophan: step 1/2. Its function is as follows. Heme-dependent dioxygenase that catalyzes the oxidative cleavage of the L-tryptophan (L-Trp) pyrrole ring and converts L-tryptophan to N-formyl-L-kynurenine. Catalyzes the oxidative cleavage of the indole moiety. This Burkholderia ambifaria (strain ATCC BAA-244 / DSM 16087 / CCUG 44356 / LMG 19182 / AMMD) (Burkholderia cepacia (strain AMMD)) protein is Tryptophan 2,3-dioxygenase.